Reading from the N-terminus, the 686-residue chain is MPASSVRLPLRLLTLAGLLALAGAAALARGAPQGGPPSPQGGPAPTAAPARGPTLFVLVGDGSAGFVFQLGGLGALNDTRIRGHLLGRYLVSYQVVPPPVSAWYFVQRPRERPRLSGPPSGAELVAFDAPGVRRTYTTAAVWPAEVAVLADAEARCPAAVFNVTLGEAFLGLRVALRSFLPLEVIISAERMRMIAPPALGAGLEPPGPPAGRFHVYTLGFLSDGAMHQTMRDVAAYVHESDDYLAQLSAAHAAALAAVVQPGPYYFYRAAVRLGVAAFVFSEAARRDRRASAPALLRVESDARLLSRLLMRAAGCPAGFAGLFDGRAERVPVAPADQLRAAWTFGEDPAPRLDLARATVAEAYRRSVRGKPFDQQALFFAVALLLRAGGPGDARETLLRTTAMCTAERAAAAAELTRAALSPAAAWNEPFSLLDVLSPCAVSLRRDLGGDATLANLGAAARLALAPAGAPGAAAATDEGAEEEEEDPVARAAPEIPAEALLALPLRGGASFVFTRRRPDCGPAYTLGGVDIANPLVLALVSNDSAACDYTDRMPESQHLPATDNPSVCVYCDCVFVRYSSAGTILETVLIESKDMEEQLMAGANSTIPSFNPTLHGGDVKALMLFPNGTVVDLLSFTSTRLAPVSPAYVVASVVGAAITVGILYALFKMLCSFSSEGYSRLINARS.

The signal sequence occupies residues 1–24 (MPASSVRLPLRLLTLAGLLALAGA). Residues 25–646 (AALARGAPQG…TSTRLAPVSP (622 aa)) are Virion surface-facing. 5 N-linked (GlcNAc...) asparagine; by host glycosylation sites follow: Asn-77, Asn-162, Asn-542, Asn-604, and Asn-627. An interaction with gL region spans residues 157-217 (PAAVFNVTLG…PPAGRFHVYT (61 aa)). Residues 647 to 667 (AYVVASVVGAAITVGILYALF) form a helical membrane-spanning segment. The Intravirion segment spans residues 668-686 (KMLCSFSSEGYSRLINARS).

This sequence belongs to the herpesviridae glycoprotein H family. In terms of assembly, interacts with glycoprotein L (gL); this interaction is necessary for the correct processing and cell surface expression of gH. The heterodimer gH/gL seems to interact with gB trimers during fusion. In terms of processing, N-glycosylated, O-glycosylated, and sialylated.

The protein resides in the virion membrane. It is found in the host cell membrane. It localises to the host endosome membrane. In terms of biological role, the heterodimer glycoprotein H-glycoprotein L is required for the fusion of viral and plasma membranes leading to virus entry into the host cell. Following initial binding to host receptor, membrane fusion is mediated by the fusion machinery composed of gB and the heterodimer gH/gL. May also be involved in the fusion between the virion envelope and the outer nuclear membrane during virion morphogenesis. The chain is Envelope glycoprotein H from Suid herpesvirus 1 (strain Rice) (SuHV-1).